A 276-amino-acid polypeptide reads, in one-letter code: S-adenosylmethionine decarboxylase proenzyme (276 aa).

S126 functions as the Schiff-base intermediate with substrate; via pyruvic acid in the catalytic mechanism. Residue S126 is modified to Pyruvic acid (Ser); by autocatalysis. The active-site Proton acceptor; for processing activity is the H131. Catalysis depends on C154, which acts as the Proton donor; for catalytic activity.

It belongs to the prokaryotic AdoMetDC family. Type 2 subfamily. Heterooctamer of four alpha and four beta chains arranged as a tetramer of alpha/beta heterodimers. It depends on pyruvate as a cofactor. In terms of processing, is synthesized initially as an inactive proenzyme. Formation of the active enzyme involves a self-maturation process in which the active site pyruvoyl group is generated from an internal serine residue via an autocatalytic post-translational modification. Two non-identical subunits are generated from the proenzyme in this reaction, and the pyruvate is formed at the N-terminus of the alpha chain, which is derived from the carboxyl end of the proenzyme. The post-translation cleavage follows an unusual pathway, termed non-hydrolytic serinolysis, in which the side chain hydroxyl group of the serine supplies its oxygen atom to form the C-terminus of the beta chain, while the remainder of the serine residue undergoes an oxidative deamination to produce ammonia and the pyruvoyl group blocking the N-terminus of the alpha chain.

It catalyses the reaction S-adenosyl-L-methionine + H(+) = S-adenosyl 3-(methylsulfanyl)propylamine + CO2. It functions in the pathway amine and polyamine biosynthesis; S-adenosylmethioninamine biosynthesis; S-adenosylmethioninamine from S-adenosyl-L-methionine: step 1/1. Its function is as follows. Catalyzes the decarboxylation of S-adenosylmethionine to S-adenosylmethioninamine (dcAdoMet), the propylamine donor required for the synthesis of the polyamines spermine and spermidine from the diamine putrescine. The polypeptide is S-adenosylmethionine decarboxylase proenzyme (Alcanivorax borkumensis (strain ATCC 700651 / DSM 11573 / NCIMB 13689 / SK2)).